Consider the following 340-residue polypeptide: Phosphoribosylformylglycinamidine cyclo-ligase (340 aa).

It belongs to the AIR synthase family.

Its subcellular location is the cytoplasm. It carries out the reaction 2-formamido-N(1)-(5-O-phospho-beta-D-ribosyl)acetamidine + ATP = 5-amino-1-(5-phospho-beta-D-ribosyl)imidazole + ADP + phosphate + H(+). It participates in purine metabolism; IMP biosynthesis via de novo pathway; 5-amino-1-(5-phospho-D-ribosyl)imidazole from N(2)-formyl-N(1)-(5-phospho-D-ribosyl)glycinamide: step 2/2. In Streptococcus agalactiae serotype Ia (strain ATCC 27591 / A909 / CDC SS700), this protein is Phosphoribosylformylglycinamidine cyclo-ligase.